Here is a 259-residue protein sequence, read N- to C-terminus: DNA repair protein RecO (259 aa).

Belongs to the RecO family.

Involved in DNA repair and RecF pathway recombination. This is DNA repair protein RecO from Rhizobium rhizogenes (strain K84 / ATCC BAA-868) (Agrobacterium radiobacter).